The following is a 208-amino-acid chain: uncharacterized protein (208 aa).

6 helical membrane-spanning segments follow: residues 5–25 (VIGI…KEAW), 41–61 (MLLI…IAAL), 69–89 (ANGI…LFFL), 123–143 (VLLG…ICGL), 150–170 (VFFF…TIAG), and 176–196 (NKLL…LVIY).

The protein localises to the cell membrane. This is an uncharacterized protein from Bacillus subtilis (strain 168).